We begin with the raw amino-acid sequence, 71 residues long: uncharacterized protein (71 aa).

The protein belongs to the ycf40 family.

Its subcellular location is the plastid. The protein resides in the chloroplast. This is an uncharacterized protein from Pyropia yezoensis (Susabi-nori).